The primary structure comprises 129 residues: Regulator of ribonuclease activity B (129 aa).

It belongs to the RraB family. In terms of assembly, interacts with the C-terminal region of Rne.

Its subcellular location is the cytoplasm. Functionally, globally modulates RNA abundance by binding to RNase E (Rne) and regulating its endonucleolytic activity. Can modulate Rne action in a substrate-dependent manner by altering the composition of the degradosome. This is Regulator of ribonuclease activity B from Shewanella denitrificans (strain OS217 / ATCC BAA-1090 / DSM 15013).